A 30-amino-acid polypeptide reads, in one-letter code: Uperin-6.2 (30 aa).

In terms of tissue distribution, expressed by the skin dorsal glands.

It localises to the secreted. The chain is Uperin-6.2 from Uperoleia inundata (Floodplain toadlet).